The following is a 118-amino-acid chain: Large ribosomal subunit protein uL18 (118 aa).

The disordered stretch occupies residues 1-22; it reads MISKPDKNKLRQKRHRRVRGKL. Residues 10–20 show a composition bias toward basic residues; sequence LRQKRHRRVRG.

This sequence belongs to the universal ribosomal protein uL18 family. In terms of assembly, part of the 50S ribosomal subunit; part of the 5S rRNA/L5/L18/L25 subcomplex. Contacts the 5S and 23S rRNAs.

In terms of biological role, this is one of the proteins that bind and probably mediate the attachment of the 5S RNA into the large ribosomal subunit, where it forms part of the central protuberance. This Streptococcus thermophilus (strain ATCC BAA-491 / LMD-9) protein is Large ribosomal subunit protein uL18.